A 183-amino-acid polypeptide reads, in one-letter code: Putative 3-methyladenine DNA glycosylase (183 aa).

This sequence belongs to the DNA glycosylase MPG family.

This Rickettsia conorii (strain ATCC VR-613 / Malish 7) protein is Putative 3-methyladenine DNA glycosylase.